A 249-amino-acid chain; its full sequence is Mannose-binding protein C (249 aa).

Residues methionine 1–alanine 20 form the signal peptide. The Collagen-like domain maps to glycine 43 to asparagine 101. Residues glycine 43–glycine 103 form a disordered region. Proline 48 bears the 4-hydroxyproline mark. Positions lysine 50–glutamate 62 are enriched in basic and acidic residues. Proline 63, proline 74, proline 83, and proline 86 each carry 4-hydroxyproline. Low complexity predominate over residues proline 79–lysine 95. Positions arginine 113–leucine 131 form a coiled coil. Residues valine 135 to glutamate 246 enclose the C-type lectin domain. Cystine bridges form between cysteine 156/cysteine 245 and cysteine 223/cysteine 237.

Oligomeric complex of 3 or more homotrimers. Interacts with MASP1 and MASP2. Interacts with MEP1A and MEP1B and may inhibit their catalytic activity. Post-translationally, hydroxylation on proline residues within the sequence motif, GXPG, is most likely to be 4-hydroxy as this fits the requirement for 4-hydroxylation in vertebrates.

The protein resides in the secreted. In terms of biological role, calcium-dependent lectin involved in innate immune defense. Binds mannose, fucose and N-acetylglucosamine on different microorganisms and activates the lectin complement pathway. Binds to late apoptotic cells, as well as to apoptotic blebs and to necrotic cells, but not to early apoptotic cells, facilitating their uptake by macrophages. This Bos taurus (Bovine) protein is Mannose-binding protein C (MBL).